The sequence spans 556 residues: Oxygen-dependent choline dehydrogenase (556 aa).

4–33 provides a ligand contact to FAD; that stretch reads DYIIIGAGSAGNVLATRLTEDPNTTVLLLE. Histidine 473 acts as the Proton acceptor in catalysis.

This sequence belongs to the GMC oxidoreductase family. The cofactor is FAD.

It carries out the reaction choline + A = betaine aldehyde + AH2. The catalysed reaction is betaine aldehyde + NAD(+) + H2O = glycine betaine + NADH + 2 H(+). It functions in the pathway amine and polyamine biosynthesis; betaine biosynthesis via choline pathway; betaine aldehyde from choline (cytochrome c reductase route): step 1/1. Involved in the biosynthesis of the osmoprotectant glycine betaine. Catalyzes the oxidation of choline to betaine aldehyde and betaine aldehyde to glycine betaine at the same rate. In Escherichia coli O127:H6 (strain E2348/69 / EPEC), this protein is Oxygen-dependent choline dehydrogenase.